Consider the following 121-residue polypeptide: Large ribosomal subunit protein uL14 (121 aa).

This sequence belongs to the universal ribosomal protein uL14 family. Part of the 50S ribosomal subunit. Forms a cluster with proteins L3 and L19. In the 70S ribosome, L14 and L19 interact and together make contacts with the 16S rRNA in bridges B5 and B8.

Binds to 23S rRNA. Forms part of two intersubunit bridges in the 70S ribosome. This chain is Large ribosomal subunit protein uL14, found in Synechococcus sp. (strain CC9902).